A 1744-amino-acid polypeptide reads, in one-letter code: DNA-directed RNA polymerase I subunit RPA1 (1744 aa).

Zn(2+) contacts are provided by C56, C69, and H72. Positions 597, 599, and 601 each coordinate Mg(2+). Residues P953–D965 form a bridging helix region. The interval V1333–S1484 is disordered. 2 stretches are compositionally biased toward gly residues: residues D1341–G1354 and D1366–F1376. Positions R1464–T1478 are enriched in basic and acidic residues.

This sequence belongs to the RNA polymerase beta' chain family. Component of the RNA polymerase I (Pol I) complex consisting of at least 13 subunits. Post-translationally, phosphorylated.

The protein resides in the nucleus. Its subcellular location is the nucleolus. The catalysed reaction is RNA(n) + a ribonucleoside 5'-triphosphate = RNA(n+1) + diphosphate. Functionally, DNA-dependent RNA polymerase catalyzes the transcription of DNA into RNA using the four ribonucleoside triphosphates as substrates. Largest and catalytic core component of RNA polymerase I which synthesizes ribosomal RNA precursors. Forms the polymerase active center together with the second largest subunit. A single stranded DNA template strand of the promoter is positioned within the central active site cleft of Pol I. A bridging helix emanates from RPA1 and crosses the cleft near the catalytic site and is thought to promote translocation of Pol I by acting as a ratchet that moves the RNA-DNA hybrid through the active site by switching from straight to bent conformations at each step of nucleotide addition. This is DNA-directed RNA polymerase I subunit RPA1 (TRP11) from Trypanosoma brucei brucei.